A 95-amino-acid polypeptide reads, in one-letter code: Aspartyl/glutamyl-tRNA(Asn/Gln) amidotransferase subunit C (95 aa).

It belongs to the GatC family. Heterotrimer of A, B and C subunits.

It carries out the reaction L-glutamyl-tRNA(Gln) + L-glutamine + ATP + H2O = L-glutaminyl-tRNA(Gln) + L-glutamate + ADP + phosphate + H(+). The enzyme catalyses L-aspartyl-tRNA(Asn) + L-glutamine + ATP + H2O = L-asparaginyl-tRNA(Asn) + L-glutamate + ADP + phosphate + 2 H(+). Its function is as follows. Allows the formation of correctly charged Asn-tRNA(Asn) or Gln-tRNA(Gln) through the transamidation of misacylated Asp-tRNA(Asn) or Glu-tRNA(Gln) in organisms which lack either or both of asparaginyl-tRNA or glutaminyl-tRNA synthetases. The reaction takes place in the presence of glutamine and ATP through an activated phospho-Asp-tRNA(Asn) or phospho-Glu-tRNA(Gln). The sequence is that of Aspartyl/glutamyl-tRNA(Asn/Gln) amidotransferase subunit C from Magnetococcus marinus (strain ATCC BAA-1437 / JCM 17883 / MC-1).